Reading from the N-terminus, the 61-residue chain is Photosystem II reaction center protein K (61 aa).

Residues 1 to 24 constitute a propeptide that is removed on maturation; sequence MPNIFSLICICLNSALQPSGFFFA. Residues 36–56 form a helical membrane-spanning segment; that stretch reads IVDFMPVIPVLFFLLAFVWQA.

Belongs to the PsbK family. PSII is composed of 1 copy each of membrane proteins PsbA, PsbB, PsbC, PsbD, PsbE, PsbF, PsbH, PsbI, PsbJ, PsbK, PsbL, PsbM, PsbT, PsbX, PsbY, PsbZ, Psb30/Ycf12, at least 3 peripheral proteins of the oxygen-evolving complex and a large number of cofactors. It forms dimeric complexes.

It localises to the plastid. Its subcellular location is the chloroplast thylakoid membrane. Its function is as follows. One of the components of the core complex of photosystem II (PSII). PSII is a light-driven water:plastoquinone oxidoreductase that uses light energy to abstract electrons from H(2)O, generating O(2) and a proton gradient subsequently used for ATP formation. It consists of a core antenna complex that captures photons, and an electron transfer chain that converts photonic excitation into a charge separation. In Nymphaea alba (White water-lily), this protein is Photosystem II reaction center protein K.